The sequence spans 446 residues: N-succinylarginine dihydrolase (446 aa).

Substrate-binding positions include 19 to 28 (AGLSFGNVAS), asparagine 110, and 137 to 138 (HR). Glutamate 174 is an active-site residue. Arginine 213 contributes to the substrate binding site. The active site involves histidine 249. Aspartate 251 and asparagine 364 together coordinate substrate. Cysteine 370 (nucleophile) is an active-site residue.

The protein belongs to the succinylarginine dihydrolase family. As to quaternary structure, homodimer.

The enzyme catalyses N(2)-succinyl-L-arginine + 2 H2O + 2 H(+) = N(2)-succinyl-L-ornithine + 2 NH4(+) + CO2. The protein operates within amino-acid degradation; L-arginine degradation via AST pathway; L-glutamate and succinate from L-arginine: step 2/5. Functionally, catalyzes the hydrolysis of N(2)-succinylarginine into N(2)-succinylornithine, ammonia and CO(2). The sequence is that of N-succinylarginine dihydrolase from Burkholderia ambifaria (strain MC40-6).